Reading from the N-terminus, the 212-residue chain is Probable GTP-binding protein EngB (212 aa).

An EngB-type G domain is found at 38–210; that stretch reads SLPEIAFVGK…KASLAKCIKP (173 aa). Residues 46 to 53, 73 to 77, 91 to 94, 158 to 161, and 189 to 191 contribute to the GTP site; these read GKSNVGKS, GRTRQ, DLPG, TKSD, and VSS. Mg(2+) is bound by residues Ser-53 and Thr-75.

The protein belongs to the TRAFAC class TrmE-Era-EngA-EngB-Septin-like GTPase superfamily. EngB GTPase family. The cofactor is Mg(2+).

Necessary for normal cell division and for the maintenance of normal septation. This Rickettsia felis (strain ATCC VR-1525 / URRWXCal2) (Rickettsia azadi) protein is Probable GTP-binding protein EngB.